A 255-amino-acid polypeptide reads, in one-letter code: Type III pantothenate kinase (255 aa).

Residue 6–13 (DVGNTNIV) participates in ATP binding. Substrate contacts are provided by residues Tyr-100 and 107–110 (GADR). Catalysis depends on Asp-109, which acts as the Proton acceptor. Asp-129 contacts K(+). ATP is bound at residue Thr-132. Thr-184 lines the substrate pocket.

This sequence belongs to the type III pantothenate kinase family. In terms of assembly, homodimer. NH4(+) serves as cofactor. The cofactor is K(+).

The protein localises to the cytoplasm. The enzyme catalyses (R)-pantothenate + ATP = (R)-4'-phosphopantothenate + ADP + H(+). It functions in the pathway cofactor biosynthesis; coenzyme A biosynthesis; CoA from (R)-pantothenate: step 1/5. Functionally, catalyzes the phosphorylation of pantothenate (Pan), the first step in CoA biosynthesis. This Geobacter sulfurreducens (strain ATCC 51573 / DSM 12127 / PCA) protein is Type III pantothenate kinase.